Here is a 95-residue protein sequence, read N- to C-terminus: uncharacterized protein (95 aa).

This is an uncharacterized protein from Homo sapiens (Human).